Here is a 382-residue protein sequence, read N- to C-terminus: Non-structural maintenance of chromosomes element 4 homolog A (382 aa).

The span at 1–21 (MSGDSSGRRPEGRGRGRDPHR) shows a compositional bias: basic and acidic residues. A disordered region spans residues 1 to 80 (MSGDSSGRRP…ASLEEETDPS (80 aa)). The span at 31-41 (RSPLSPGSRRG) shows a compositional bias: low complexity. Residues 42–55 (AAPERREAPERPGL) show a composition bias toward basic and acidic residues. Positions 56-78 (EDTEPSDSGDEMIDPASLEEETD) are enriched in acidic residues. Thr342 bears the Phosphothreonine mark. Phosphoserine is present on Ser374.

The protein belongs to the NSE4 family. In terms of assembly, component of the SMC5-SMC6 complex which consists at least of SMC5, SMC6, NSMCE2, NSMCE1, NSMCE4A or EID3 and NSMCE3. NSMCE1, NSMCE4A or EID3 and NSMCE3 probably form a subcomplex that bridges the head domains of the SMC5:SMC6 heterodimer. Interacts with NSMCE3.

Its subcellular location is the nucleus. The protein resides in the chromosome. The protein localises to the telomere. Component of the SMC5-SMC6 complex, a complex involved in repair of DNA double-strand breaks by homologous recombination. The complex may promote sister chromatid homologous recombination by recruiting the SMC1-SMC3 cohesin complex to double-strand breaks. The complex is required for telomere maintenance via recombination and mediates sumoylation of shelterin complex (telosome) components. This chain is Non-structural maintenance of chromosomes element 4 homolog A (NSMCE4A), found in Bos taurus (Bovine).